The chain runs to 156 residues: Small ribosomal subunit protein uS7 (156 aa).

Belongs to the universal ribosomal protein uS7 family. In terms of assembly, part of the 30S ribosomal subunit. Contacts proteins S9 and S11.

In terms of biological role, one of the primary rRNA binding proteins, it binds directly to 16S rRNA where it nucleates assembly of the head domain of the 30S subunit. Is located at the subunit interface close to the decoding center, probably blocks exit of the E-site tRNA. This Clostridium perfringens (strain ATCC 13124 / DSM 756 / JCM 1290 / NCIMB 6125 / NCTC 8237 / Type A) protein is Small ribosomal subunit protein uS7.